A 163-amino-acid polypeptide reads, in one-letter code: Nucleotide-binding protein CJJ81176_0398 (163 aa).

It belongs to the YajQ family.

In terms of biological role, nucleotide-binding protein. The polypeptide is Nucleotide-binding protein CJJ81176_0398 (Campylobacter jejuni subsp. jejuni serotype O:23/36 (strain 81-176)).